The primary structure comprises 111 residues: Large ribosomal subunit protein uL22 (111 aa).

This sequence belongs to the universal ribosomal protein uL22 family. Part of the 50S ribosomal subunit.

In terms of biological role, this protein binds specifically to 23S rRNA; its binding is stimulated by other ribosomal proteins, e.g. L4, L17, and L20. It is important during the early stages of 50S assembly. It makes multiple contacts with different domains of the 23S rRNA in the assembled 50S subunit and ribosome. The globular domain of the protein is located near the polypeptide exit tunnel on the outside of the subunit, while an extended beta-hairpin is found that lines the wall of the exit tunnel in the center of the 70S ribosome. In Francisella tularensis subsp. tularensis (strain FSC 198), this protein is Large ribosomal subunit protein uL22.